A 270-amino-acid chain; its full sequence is Phosphatidylglycerol--prolipoprotein diacylglyceryl transferase (270 aa).

Transmembrane regions (helical) follow at residues leucine 17 to glycine 37, isoleucine 63 to tyrosine 83, and isoleucine 95 to serine 115. A 1,2-diacyl-sn-glycero-3-phospho-(1'-sn-glycerol) is bound at residue arginine 146. The next 3 membrane-spanning stretches (helical) occupy residues serine 182–alanine 202, glycine 209–phenylalanine 229, and methionine 243–tryptophan 263.

This sequence belongs to the Lgt family.

The protein resides in the cell inner membrane. It catalyses the reaction L-cysteinyl-[prolipoprotein] + a 1,2-diacyl-sn-glycero-3-phospho-(1'-sn-glycerol) = an S-1,2-diacyl-sn-glyceryl-L-cysteinyl-[prolipoprotein] + sn-glycerol 1-phosphate + H(+). Its pathway is protein modification; lipoprotein biosynthesis (diacylglyceryl transfer). Its function is as follows. Catalyzes the transfer of the diacylglyceryl group from phosphatidylglycerol to the sulfhydryl group of the N-terminal cysteine of a prolipoprotein, the first step in the formation of mature lipoproteins. The polypeptide is Phosphatidylglycerol--prolipoprotein diacylglyceryl transferase (Paracidovorax citrulli (strain AAC00-1) (Acidovorax citrulli)).